We begin with the raw amino-acid sequence, 232 residues long: Octanoyltransferase (232 aa).

The 187-residue stretch at 40 to 226 folds into the BPL/LPL catalytic domain; the sequence is GSAPERVWLL…TWQDLFGSVP (187 aa). Substrate contacts are provided by residues 79 to 86, 157 to 159, and 170 to 172; these read RGGQWTYH, ALG, and GVA. The Acyl-thioester intermediate role is filled by Cys188.

This sequence belongs to the LipB family.

Its subcellular location is the cytoplasm. The enzyme catalyses octanoyl-[ACP] + L-lysyl-[protein] = N(6)-octanoyl-L-lysyl-[protein] + holo-[ACP] + H(+). The protein operates within protein modification; protein lipoylation via endogenous pathway; protein N(6)-(lipoyl)lysine from octanoyl-[acyl-carrier-protein]: step 1/2. Catalyzes the transfer of endogenously produced octanoic acid from octanoyl-acyl-carrier-protein onto the lipoyl domains of lipoate-dependent enzymes. Lipoyl-ACP can also act as a substrate although octanoyl-ACP is likely to be the physiological substrate. The protein is Octanoyltransferase of Gluconacetobacter diazotrophicus (strain ATCC 49037 / DSM 5601 / CCUG 37298 / CIP 103539 / LMG 7603 / PAl5).